A 663-amino-acid chain; its full sequence is UvrABC system protein B (663 aa).

A compositionally biased stretch (basic and acidic residues) spans 1–10 (MIDKRDDKPF). The disordered stretch occupies residues 1–23 (MIDKRDDKPFKLKSKYKPSGDQP). The region spanning 31–418 (DNIEGGEKAQ…TNTIIEQIIR (388 aa)) is the Helicase ATP-binding domain. 44 to 51 (GATGTGKT) serves as a coordination point for ATP. Positions 97–120 (YYDYYQPEAYVPSSDTYIEKDSSV) match the Beta-hairpin motif. The 167-residue stretch at 435–601 (QMDDLLGEIN…TIKKDIRGLI (167 aa)) folds into the Helicase C-terminal domain. A UVR domain is found at 627–662 (KEAINALQKQMQEAAELLDFELAAQMRDLILELKLM).

Belongs to the UvrB family. As to quaternary structure, forms a heterotetramer with UvrA during the search for lesions. Interacts with UvrC in an incision complex.

The protein resides in the cytoplasm. Its function is as follows. The UvrABC repair system catalyzes the recognition and processing of DNA lesions. A damage recognition complex composed of 2 UvrA and 2 UvrB subunits scans DNA for abnormalities. Upon binding of the UvrA(2)B(2) complex to a putative damaged site, the DNA wraps around one UvrB monomer. DNA wrap is dependent on ATP binding by UvrB and probably causes local melting of the DNA helix, facilitating insertion of UvrB beta-hairpin between the DNA strands. Then UvrB probes one DNA strand for the presence of a lesion. If a lesion is found the UvrA subunits dissociate and the UvrB-DNA preincision complex is formed. This complex is subsequently bound by UvrC and the second UvrB is released. If no lesion is found, the DNA wraps around the other UvrB subunit that will check the other stand for damage. The polypeptide is UvrABC system protein B (Streptococcus pyogenes serotype M3 (strain ATCC BAA-595 / MGAS315)).